The following is a 538-amino-acid chain: MKIYLRFVWILIIILNFLLNLFITTNGVIIVNAFKKSLIVAASFASLSLFNSATAELVYKPLEQPVEPAKPDLKIESVNEKFAEKYPNQYNSWRSTANGDGENIIYADEENPRLIVLWGGYAFAKEYNAPRGHFYAVTDVRNILRTGAPKTANDGPQAMACWTCKGPDVPRLIAEWGEKDYFNAKWAKGGPEIVNSIGCADCHDTTSKDFAEGKPALRIARPHVLRALDALEKATAEKDKAEGRPHNNLSFNTAARTEKRAEICANCHVEYYFAGDIKQVTFPWDNGQTADDIEKYYDDIGFTDWTHSLSKAPMLKAQHPDFEIWSLGMHGKNGVTCVDCHMPKVQGADGKVYTDHQIQNPFDAFDHTCANCHDQSKEKLRDIVTSRKKEVKDVMGRLEDQVVKSHFEAKAAWDAGATKEEMEAALMDIRHAQWRWDYTAASHGGHMHAPEVVLRVLASGLDKVADARTKLAVILTKHGVKTPVQIPDISTADKAWKVMGIDIEKERKAKEEFLKTVVPQWEQQAREKGLLVDPPAQK.

The first 55 residues, 1–55 (MKIYLRFVWILIIILNFLLNLFITTNGVIIVNAFKKSLIVAASFASLSLFNSATA), serve as a signal peptide directing secretion. Position 133 (histidine 133) interacts with heme c. Cysteine 161, cysteine 164, and lysine 165 together coordinate heme. Heme c contacts are provided by cysteine 199, cysteine 202, histidine 203, cysteine 264, cysteine 267, and histidine 268. Positions 270, 271, 316, and 318 each coordinate Ca(2+). Tyrosine 271 is a binding site for substrate. Histidine 319 is a binding site for substrate. The heme c site is built by histidine 330, cysteine 337, cysteine 340, histidine 341, histidine 356, cysteine 369, cysteine 372, histidine 373, and histidine 448.

The protein belongs to the cytochrome c-552 family. Requires Ca(2+) as cofactor. Heme c is required as a cofactor.

Its subcellular location is the periplasm. The enzyme catalyses 6 Fe(III)-[cytochrome c] + NH4(+) + 2 H2O = 6 Fe(II)-[cytochrome c] + nitrite + 8 H(+). The protein operates within nitrogen metabolism; nitrate reduction (assimilation). Functionally, catalyzes the reduction of nitrite to ammonia, consuming six electrons in the process. This is Cytochrome c-552 from Haemophilus influenzae (strain 86-028NP).